The following is a 38-amino-acid chain: Large ribosomal subunit protein bL36 (38 aa).

This sequence belongs to the bacterial ribosomal protein bL36 family.

This chain is Large ribosomal subunit protein bL36, found in Mycoplasma mobile (strain ATCC 43663 / 163K / NCTC 11711) (Mesomycoplasma mobile).